The following is a 185-amino-acid chain: Transcription factor bHLH109 (185 aa).

Positions 67–117 constitute a bHLH domain; it reads RSMEYRMMMEKKRRKEIKDKVDILQGLMPNHCTKPDLASKLENIIEYIKSL.

This sequence belongs to the bHLH protein family. In terms of assembly, homodimer.

Its subcellular location is the nucleus. Transcription factor involved in somatic embryogenesis. Acts as a positive regulator of somatic embryo formation. Acts as a positive regulator of ECP63 by targeting its promoter and inducing its expression. The protein is Transcription factor bHLH109 (BHLH109) of Arabidopsis thaliana (Mouse-ear cress).